Consider the following 527-residue polypeptide: (3S)-3-amino-3-(3-chloro-4-hydroxyphenyl)propanoyl-[peptidyl-carrier protein SgcC2] monooxygenase (527 aa).

Residues 1–10 (MPHGAEREAS) show a composition bias toward basic and acidic residues. Residues 1 to 22 (MPHGAEREASPAEESAGTRPLT) form a disordered region. FAD-binding positions include 161-163 (HAF), 167-170 (PVDR), and threonine 202.

The protein belongs to the FADH(2)-utilizing monooxygenase family. As to quaternary structure, homotetramer.

It carries out the reaction (3S)-3-amino-3-(3-chloro-4-hydroxyphenyl)propanoyl-[SgcC2 peptidyl-carrier protein] + FADH2 + O2 = (3S)-3-amino-3-(3-chloro-4,5-dihydroxyphenyl)propanoyl-[SgcC2 peptidyl-carrier protein] + FAD + H2O + H(+). It functions in the pathway antibiotic biosynthesis. The SgcE6-SgcC hydroxylation activity decreases in the presence of excess FAD. Functionally, oxygenase component of a two-component system involved in the biosynthesis of the enediyne antitumor antibiotic C-1027. Uses FADH(2) supplied by SgcE6 to catalyze the C-5 hydroxylation of (S)-3-chloro-beta-tyrosyl-S-SgcC2. Can also efficiently catalyze the regioselective hydroxylation of other 3-substituted beta-tyrosyl-S-SgcC2 analogs, including the bromo-, iodo-, fluoro-, and methyl-substituted analogs, but does not accept 3-hydroxy-beta-tyrosyl-S-SgcC2 as a substrate. Is only active with SgcC2 (peptidyl carrier protein)-tethered substrates. In Streptomyces globisporus, this protein is (3S)-3-amino-3-(3-chloro-4-hydroxyphenyl)propanoyl-[peptidyl-carrier protein SgcC2] monooxygenase.